We begin with the raw amino-acid sequence, 91 residues long: Large ribosomal subunit protein bL27 (91 aa).

Residues 1-22 (MAHKKAGGSSRNGRDSDGRRLG) are disordered.

This sequence belongs to the bacterial ribosomal protein bL27 family.

The protein is Large ribosomal subunit protein bL27 of Beijerinckia indica subsp. indica (strain ATCC 9039 / DSM 1715 / NCIMB 8712).